A 286-amino-acid polypeptide reads, in one-letter code: Shikimate dehydrogenase (NADP(+)) (286 aa).

Residues 22-24 and Thr-71 contribute to the shikimate site; that span reads SRS. Lys-75 serves as the catalytic Proton acceptor. Residue Glu-87 coordinates NADP(+). Shikimate is bound by residues Asn-96 and Asp-111. Residues 136 to 140, 160 to 165, and Ile-225 contribute to the NADP(+) site; these read GAGGA and NRTVER. Tyr-227 is a binding site for shikimate. Gly-248 contacts NADP(+).

It belongs to the shikimate dehydrogenase family. Homodimer.

The catalysed reaction is shikimate + NADP(+) = 3-dehydroshikimate + NADPH + H(+). It participates in metabolic intermediate biosynthesis; chorismate biosynthesis; chorismate from D-erythrose 4-phosphate and phosphoenolpyruvate: step 4/7. Its function is as follows. Involved in the biosynthesis of the chorismate, which leads to the biosynthesis of aromatic amino acids. Catalyzes the reversible NADPH linked reduction of 3-dehydroshikimate (DHSA) to yield shikimate (SA). This chain is Shikimate dehydrogenase (NADP(+)), found in Rhizobium rhizogenes (strain K84 / ATCC BAA-868) (Agrobacterium radiobacter).